The primary structure comprises 403 residues: Propionate kinase (403 aa).

Belongs to the acetokinase family. PduW subfamily.

Its subcellular location is the cytoplasm. It carries out the reaction propanoate + ATP = propanoyl phosphate + ADP. Its pathway is polyol metabolism; 1,2-propanediol degradation. In terms of biological role, works with phosphate acetyltransferase (pta) to capture exogenous propionate and regenerate propionyl-CoA during degradation of 1,2-propanediol (1,2-PD). The sequence is that of Propionate kinase from Citrobacter rodentium (strain ICC168) (Citrobacter freundii biotype 4280).